Consider the following 348-residue polypeptide: tRNA N6-adenosine threonylcarbamoyltransferase (348 aa).

Fe cation is bound by residues histidine 116 and histidine 120. Residues 138–142 (QVSGG), aspartate 171, glycine 184, aspartate 188, and asparagine 277 contribute to the substrate site. Residue aspartate 309 coordinates Fe cation.

Belongs to the KAE1 / TsaD family. Requires Fe(2+) as cofactor.

The protein resides in the cytoplasm. It catalyses the reaction L-threonylcarbamoyladenylate + adenosine(37) in tRNA = N(6)-L-threonylcarbamoyladenosine(37) in tRNA + AMP + H(+). In terms of biological role, required for the formation of a threonylcarbamoyl group on adenosine at position 37 (t(6)A37) in tRNAs that read codons beginning with adenine. Is involved in the transfer of the threonylcarbamoyl moiety of threonylcarbamoyl-AMP (TC-AMP) to the N6 group of A37, together with TsaE and TsaB. TsaD likely plays a direct catalytic role in this reaction. The sequence is that of tRNA N6-adenosine threonylcarbamoyltransferase from Lactobacillus johnsonii (strain CNCM I-12250 / La1 / NCC 533).